We begin with the raw amino-acid sequence, 855 residues long: Inactive rhomboid protein 1 (855 aa).

Residues 1–35 (MSEARRDSTSSLQRKKPPWLKLDIPSAAPATAEEP) are disordered. The Cytoplasmic portion of the chain corresponds to 1 to 411 (MSEARRDSTS…HRPFFTYWLT (411 aa)). The span at 25–35 (PSAAPATAEEP) shows a compositional bias: low complexity. Phosphoserine is present on residues S76 and S176. Phosphothreonine is present on residues T180 and T183. S390 carries the phosphoserine modification. Residues 412–432 (FVHSLVTILAVCIYGIAPVGF) form a helical membrane-spanning segment. Residues 433–655 (SQHETVDSVL…NPEVPDQFYR (223 aa)) lie on the Lumenal side of the membrane. An N-linked (GlcNAc...) asparagine glycan is attached at N583. A helical transmembrane segment spans residues 656–676 (LWLSLFLHAGILHCLVSICFQ). The Cytoplasmic segment spans residues 677-691 (MTVLRDLEKLAGWHR). Residues 692-712 (IAIIYLLSGVTGNLASAIFLP) form a helical membrane-spanning segment. The Lumenal segment spans residues 713–714 (YR). Residues 715–735 (AEVGPAGSQFGILACLFVELF) traverse the membrane as a helical segment. Topologically, residues 736-746 (QSWQILARPWR) are cytoplasmic. The chain crosses the membrane as a helical span at residues 747-767 (AFFKLLAVVLFLFTFGLLPWI). Over 768–772 (DNFAH) the chain is Lumenal. The helical transmembrane segment at 773 to 793 (ISGFISGLFLSFAFLPYISFG) threads the bilayer. Residues 794–803 (KFDLYRKRCQ) are Cytoplasmic-facing. Residues 804–824 (IIVFQVVFLGLLAGLVVLFYV) form a helical membrane-spanning segment. The Lumenal segment spans residues 825 to 855 (YPVRCEWCEFLTCIPFTDKFCEKYELDAQLH).

The protein belongs to the peptidase S54 family. In terms of assembly, homodimer, or homooligomer. Interacts with TGFA and HBEGF. Interacts with EGF; may retain EGF in the endoplasmic reticulum and regulates its degradation through the endoplasmic reticulum-associated degradation (ERAD). Interacts (via cytoplasmic N-terminus) with FRMD8/iTAP; this interaction leads to mutual protein stabilization. Interacts with ADAM17/TACE.

It is found in the endoplasmic reticulum membrane. Its subcellular location is the golgi apparatus membrane. In terms of biological role, regulates ADAM17 protease, a sheddase of the epidermal growth factor (EGF) receptor ligands and TNF, thereby plays a role in sleep, cell survival, proliferation, migration and inflammation. Does not exhibit any protease activity on its own. The protein is Inactive rhomboid protein 1 (RHBDF1) of Callithrix jacchus (White-tufted-ear marmoset).